A 377-amino-acid chain; its full sequence is Mitochondrial pyrimidine nucleotide transporter RIM2 (377 aa).

3 Solcar repeats span residues 50–163 (VKPW…TKDM), 173–262 (ETPM…MKRL), and 286–375 (KEWC…VIRL). 6 helical membrane passes run 53–73 (WVHF…TCPF), 131–151 (GFRS…PARS), 179–199 (LMAA…IWLI), 238–258 (GLSA…LYEQ), 286–306 (KEWC…SIAT), and 347–368 (MYSG…MFGT).

Belongs to the mitochondrial carrier (TC 2.A.29) family.

Its subcellular location is the mitochondrion inner membrane. It catalyses the reaction 5-methyl-UTP(out) + UTP(in) = 5-methyl-UTP(in) + UTP(out). Its function is as follows. Mitochondrial transporter that imports/exports pyrimidine nucleotides into and from mitochondria. Selectively transports uridine, thymidine, and cytosine (deoxy)nucleoside di- and triphosphates by an antiport mechanism. Also transports, with lower efficiency, uridine, thymidine, and cytosine (deoxy)nucleoside monophosphates as well as guanosine (deoxy)nucleoside di- and triphosphate. May import (deoxy)nucleoside triphosphates in exchange for intramitochondrial (deoxy)nucleoside monophosphates, thus providing precursors necessary for de novo synthesis of mitochondrial DNA and RNA while exporting products of their catabolism. Mediates the transport of iron and other divalent metal ions like copper and zinc across the mitochondrial inner membrane in a pyrimidine nucleotide-dependent fashion. Catalyzes the co-import of pyrimidine nucleotides and divalent metal ions including ferrous iron. Participates in mitochondrial genome maintenance, regulation of mitochondrial membrane potential and mitochondrial respiration. In Saccharomyces cerevisiae (strain ATCC 204508 / S288c) (Baker's yeast), this protein is Mitochondrial pyrimidine nucleotide transporter RIM2 (RIM2).